Consider the following 162-residue polypeptide: MNLNELRDNEGSRYRKKRLGRGIGSGKGKTSGRGVKGQKAREGVSLNGFEGGQLPLYRRMPKRGFVNIFRKEYAPVNLGAISKAIESGKLDKAATVNEEALRKAGLVNGSKLAGVRLLAHGELSHGVTIEVAGASAAALAAVEKAGGTVKVLETKKEAQADA.

Positions 1–13 are enriched in basic and acidic residues; the sequence is MNLNELRDNEGSR. Residues 1-39 are disordered; sequence MNLNELRDNEGSRYRKKRLGRGIGSGKGKTSGRGVKGQK. Over residues 21–35 the composition is skewed to gly residues; the sequence is RGIGSGKGKTSGRGV.

This sequence belongs to the universal ribosomal protein uL15 family. As to quaternary structure, part of the 50S ribosomal subunit.

Binds to the 23S rRNA. The polypeptide is Large ribosomal subunit protein uL15 (Gluconobacter oxydans (strain 621H) (Gluconobacter suboxydans)).